A 288-amino-acid polypeptide reads, in one-letter code: Serpentine receptor class gamma-1 (288 aa).

7 consecutive transmembrane segments (helical) span residues 25–45 (LFLQ…VIYI), 59–79 (FYTI…FSIF), 118–138 (FQIL…LWPL), 148–168 (LKSI…TIAI), 197–217 (FSIL…TMLI), 238–258 (VYLS…FLVL), and 268–288 (ILHG…TYVM).

It belongs to the nematode receptor-like protein srg family.

The protein resides in the membrane. This is Serpentine receptor class gamma-1 (srg-1) from Caenorhabditis elegans.